Here is a 326-residue protein sequence, read N- to C-terminus: Pyruvate dehydrogenase E1 component subunit alpha (326 aa).

In terms of assembly, heterodimer of an alpha and a beta chain. It depends on thiamine diphosphate as a cofactor.

It carries out the reaction N(6)-[(R)-lipoyl]-L-lysyl-[protein] + pyruvate + H(+) = N(6)-[(R)-S(8)-acetyldihydrolipoyl]-L-lysyl-[protein] + CO2. The pyruvate dehydrogenase complex catalyzes the overall conversion of pyruvate to acetyl-CoA and CO(2). It contains multiple copies of three enzymatic components: pyruvate dehydrogenase (E1), dihydrolipoamide acetyltransferase (E2) and lipoamide dehydrogenase (E3). The chain is Pyruvate dehydrogenase E1 component subunit alpha (pdhA) from Rickettsia prowazekii (strain Madrid E).